A 193-amino-acid chain; its full sequence is Gas vesicle protein C (193 aa).

Repeats lie at residues 19–51 (VAEL…LQAF), 52–84 (YKDL…LLAF), 85–117 (HKEL…LLAF), 118–150 (YQEV…LLAF), and 151–183 (HKEL…LLKF). Positions 19-183 (VAELSLETRE…KEQKESLLKF (165 aa)) are 5 X 33 AA tandem repeats.

The protein belongs to the gas vesicle GvpC family.

It localises to the gas vesicle. In terms of biological role, confers stability, involved in shaping gas vesicles (GV), hollow, gas-filled proteinaceous nanostructures. During planktonic growth they allow positioning of the organism at a favorable depth for light or nutrient acquisition. The ratio of GvpA:GvpC is estimated to be 25:1. GvpC strengthens the GV wall, probably by connecting several GvpA proteins in the same and/or adjacent ribs. Removal of GvpC by SDS reduces the critical collapse pressure (CCP) of stored gas vesicles from 0.23 Mpa to 0.08 MPa. Removal of GvpC by urea reduces CCP of freshly isolated GVs from 0.550 MPa to 0.190 MPa; addition of recombinant GvpC restores CCP to 0.508 MPa. As the turgor pressure in this species is usually 0.35 MPa (plus the water column pressure in its growth environment), this protein is essential for GV formation. The protein is Gas vesicle protein C of Dolichospermum flosaquae (Anabaena flos-aquae).